The following is a 361-amino-acid chain: MRRAARARIDLNALRHNLRTARRAAPRSRVMAVIKAEAYGHGMLAVARALAAQADAFAISCIDEARVLREAGVTLPLVVLQGFRDAAQLIEVARLGDVQPVIHSTGQLDVLESAALPAPLRVWLKLDTGMHRLGLPPGEAAVLQNRIAALPQVAGVPGLMTHLACADEPERPETGIQLQVFDAATADLPGERSIANSAAVLRTPAACRDWVRPGIMLYGASPLAGETAQSLDLQPVMTVSAPVVAVKRLAAGDAVGYGGGYVCQSPRTMAVVAMGYGDGYPRHAPSGTPVRVHGRRCALMGRVSMDMLCVDVTEVPGVAPGDDVTLWGEGLPVDEIAAAAGTISYELLCSVGGRLRLEYVG.

Catalysis depends on lysine 35, which acts as the Proton acceptor; specific for D-alanine. Lysine 35 carries the post-translational modification N6-(pyridoxal phosphate)lysine. Arginine 132 lines the substrate pocket. Tyrosine 257 (proton acceptor; specific for L-alanine) is an active-site residue. Methionine 305 provides a ligand contact to substrate.

It belongs to the alanine racemase family. Pyridoxal 5'-phosphate is required as a cofactor.

It catalyses the reaction L-alanine = D-alanine. Its pathway is amino-acid biosynthesis; D-alanine biosynthesis; D-alanine from L-alanine: step 1/1. In terms of biological role, catalyzes the interconversion of L-alanine and D-alanine. May also act on other amino acids. This Thioalkalivibrio sulfidiphilus (strain HL-EbGR7) protein is Alanine racemase (alr).